Here is a 532-residue protein sequence, read N- to C-terminus: tRNA-2-methylthio-N(6)-dimethylallyladenosine synthase (532 aa).

The disordered stretch occupies residues 1–21 (MTSTVAHGAGSAGPADDVEPM). The 117-residue stretch at 24–140 (RTYQVRTYGC…LPALLDRARH (117 aa)) folds into the MTTase N-terminal domain. C33, C69, C103, C177, C181, and C184 together coordinate [4Fe-4S] cluster. The Radical SAM core domain maps to 163–399 (RESAYAAWVS…VELQEQISLE (237 aa)). One can recognise a TRAM domain in the interval 402 to 470 (RAIVGQRVEL…PHHLIADGGI (69 aa)). Residues 510–532 (TSCGSAGGCGSADGAGSSAGDPQ) are disordered. Residues 523 to 532 (GAGSSAGDPQ) are compositionally biased toward low complexity.

It belongs to the methylthiotransferase family. MiaB subfamily. Monomer. It depends on [4Fe-4S] cluster as a cofactor.

The protein resides in the cytoplasm. The enzyme catalyses N(6)-dimethylallyladenosine(37) in tRNA + (sulfur carrier)-SH + AH2 + 2 S-adenosyl-L-methionine = 2-methylsulfanyl-N(6)-dimethylallyladenosine(37) in tRNA + (sulfur carrier)-H + 5'-deoxyadenosine + L-methionine + A + S-adenosyl-L-homocysteine + 2 H(+). Its function is as follows. Catalyzes the methylthiolation of N6-(dimethylallyl)adenosine (i(6)A), leading to the formation of 2-methylthio-N6-(dimethylallyl)adenosine (ms(2)i(6)A) at position 37 in tRNAs that read codons beginning with uridine. In Mycobacterium ulcerans (strain Agy99), this protein is tRNA-2-methylthio-N(6)-dimethylallyladenosine synthase.